Reading from the N-terminus, the 428-residue chain is GTPase Obg (428 aa).

The Obg domain occupies 1 to 158 (MFVDQVKIYV…RDVILELKVL (158 aa)). The disordered stretch occupies residues 117–145 (ARGGRGGRGNSRFATPTNPAPEIAENGEP). Residues 159–329 (ADVGLVGFPS…LLFEVANLLE (171 aa)) form the OBG-type G domain. GTP is bound by residues 165–172 (GFPSVGKS), 190–194 (FTTIV), 212–215 (DLPG), 282–285 (NKMD), and 310–312 (SAV). Residues serine 172 and threonine 192 each contribute to the Mg(2+) site. Positions 350 to 428 (KLETEGVKFD…ILEYEFEFID (79 aa)) constitute an OCT domain.

The protein belongs to the TRAFAC class OBG-HflX-like GTPase superfamily. OBG GTPase family. Monomer. Mg(2+) serves as cofactor.

The protein localises to the cytoplasm. Functionally, an essential GTPase which binds GTP, GDP and possibly (p)ppGpp with moderate affinity, with high nucleotide exchange rates and a fairly low GTP hydrolysis rate. Plays a role in control of the cell cycle, stress response, ribosome biogenesis and in those bacteria that undergo differentiation, in morphogenesis control. This chain is GTPase Obg, found in Bacillus cereus (strain ATCC 10987 / NRS 248).